Here is a 118-residue protein sequence, read N- to C-terminus: Large ribosomal subunit protein uL18 (118 aa).

Belongs to the universal ribosomal protein uL18 family. In terms of assembly, part of the 50S ribosomal subunit; part of the 5S rRNA/L5/L18/L25 subcomplex. Contacts the 5S and 23S rRNAs.

Its function is as follows. This is one of the proteins that bind and probably mediate the attachment of the 5S RNA into the large ribosomal subunit, where it forms part of the central protuberance. This is Large ribosomal subunit protein uL18 from Wolinella succinogenes (strain ATCC 29543 / DSM 1740 / CCUG 13145 / JCM 31913 / LMG 7466 / NCTC 11488 / FDC 602W) (Vibrio succinogenes).